The chain runs to 302 residues: Urease accessory protein UreD (302 aa).

The protein belongs to the UreD family. In terms of assembly, ureD, UreF and UreG form a complex that acts as a GTP-hydrolysis-dependent molecular chaperone, activating the urease apoprotein by helping to assemble the nickel containing metallocenter of UreC. The UreE protein probably delivers the nickel.

It localises to the cytoplasm. Required for maturation of urease via the functional incorporation of the urease nickel metallocenter. This Pseudoalteromonas translucida (strain TAC 125) protein is Urease accessory protein UreD.